Reading from the N-terminus, the 340-residue chain is MIARQPIAVLGGGSFGTALANLLAENGHVVRLWMRDPEQAEAIRTRRENPRYLKGVRVLPGIEPVTDLAATVSASELIFVVLPSSALRQVLQPVSALLDGKMLVSTTKGIEAQSFKLMSQIIEEIAPRARIGVLSGPNLAREIAEHALTASVIASEDEALCQAVQAVLHGRTFRVYASGDRFGVELGGALKNVYAIMAGMAASLGMGENTKSMLITRALAEMTRFAARLGANPMTFLGLAGVGDLIVTCTSPKSRNYQVGHALGQGLALEEAVARLGEVAEGVNTLRVLKAKAEELGVYMPLVAGLHAILFEGRTLAQVIEALMTGEPKTDVDFISTSGF.

The NADPH site is built by S14, F15, R35, and K108. Positions 108 and 136 each coordinate sn-glycerol 3-phosphate. NADPH is bound at residue A140. 5 residues coordinate sn-glycerol 3-phosphate: K191, D244, S254, R255, and N256. The Proton acceptor role is filled by K191. R255 contacts NADPH. 2 residues coordinate NADPH: V279 and E281.

The protein belongs to the NAD-dependent glycerol-3-phosphate dehydrogenase family.

The protein resides in the cytoplasm. It carries out the reaction sn-glycerol 3-phosphate + NAD(+) = dihydroxyacetone phosphate + NADH + H(+). The enzyme catalyses sn-glycerol 3-phosphate + NADP(+) = dihydroxyacetone phosphate + NADPH + H(+). The protein operates within membrane lipid metabolism; glycerophospholipid metabolism. Functionally, catalyzes the reduction of the glycolytic intermediate dihydroxyacetone phosphate (DHAP) to sn-glycerol 3-phosphate (G3P), the key precursor for phospholipid synthesis. This Azotobacter vinelandii (strain DJ / ATCC BAA-1303) protein is Glycerol-3-phosphate dehydrogenase [NAD(P)+].